The sequence spans 221 residues: Translation initiation factor 6 (221 aa).

It belongs to the eIF-6 family.

Binds to the 50S ribosomal subunit and prevents its association with the 30S ribosomal subunit to form the 70S initiation complex. The protein is Translation initiation factor 6 of Halorubrum lacusprofundi (strain ATCC 49239 / DSM 5036 / JCM 8891 / ACAM 34).